Reading from the N-terminus, the 159-residue chain is Phosphopantetheine adenylyltransferase (159 aa).

Ser-9 serves as a coordination point for substrate. Residues 9–10 (SF) and His-17 each bind ATP. Substrate contacts are provided by Lys-41, Leu-73, and Lys-87. Residues 88 to 90 (GLR), Glu-98, and 122 to 128 (YSFLSSS) contribute to the ATP site.

This sequence belongs to the bacterial CoaD family. In terms of assembly, homohexamer. The cofactor is Mg(2+).

The protein resides in the cytoplasm. The catalysed reaction is (R)-4'-phosphopantetheine + ATP + H(+) = 3'-dephospho-CoA + diphosphate. It functions in the pathway cofactor biosynthesis; coenzyme A biosynthesis; CoA from (R)-pantothenate: step 4/5. Reversibly transfers an adenylyl group from ATP to 4'-phosphopantetheine, yielding dephospho-CoA (dPCoA) and pyrophosphate. The protein is Phosphopantetheine adenylyltransferase of Streptomyces avermitilis (strain ATCC 31267 / DSM 46492 / JCM 5070 / NBRC 14893 / NCIMB 12804 / NRRL 8165 / MA-4680).